The primary structure comprises 735 residues: Photosystem I P700 chlorophyll a apoprotein A2 (735 aa).

8 helical membrane-spanning segments follow: residues 47-70 (IFAS…FHVA), 136-159 (LYIG…LHLQ), 176-200 (LNHH…HVAI), 274-292 (MAHH…GHMY), 331-354 (LHFQ…QHMY), 370-396 (ASLY…IFFI), 418-440 (AIIS…LYVH), and 518-536 (FLVH…LILV). 2 residues coordinate [4Fe-4S] cluster: Cys560 and Cys569. Transmembrane regions (helical) follow at residues 576 to 597 (AFYL…YFHW) and 644 to 666 (LSVW…MFLI). Chlorophyll a is bound by residues His655, Met663, and Tyr671. Phylloquinone is bound at residue Trp672. A helical transmembrane segment spans residues 708–728 (VVGLAHFSAGYILTYAAFLIA).

The protein belongs to the PsaA/PsaB family. As to quaternary structure, the PsaA/B heterodimer binds the P700 chlorophyll special pair and subsequent electron acceptors. PSI consists of a core antenna complex that captures photons, and an electron transfer chain that converts photonic excitation into a charge separation. The eukaryotic PSI reaction center is composed of at least 11 subunits. It depends on P700 is a chlorophyll a/chlorophyll a' dimer, A0 is one or more chlorophyll a, A1 is one or both phylloquinones and FX is a shared 4Fe-4S iron-sulfur center. as a cofactor.

Its subcellular location is the plastid. It is found in the chloroplast thylakoid membrane. It carries out the reaction reduced [plastocyanin] + hnu + oxidized [2Fe-2S]-[ferredoxin] = oxidized [plastocyanin] + reduced [2Fe-2S]-[ferredoxin]. Its function is as follows. PsaA and PsaB bind P700, the primary electron donor of photosystem I (PSI), as well as the electron acceptors A0, A1 and FX. PSI is a plastocyanin/cytochrome c6-ferredoxin oxidoreductase, converting photonic excitation into a charge separation, which transfers an electron from the donor P700 chlorophyll pair to the spectroscopically characterized acceptors A0, A1, FX, FA and FB in turn. Oxidized P700 is reduced on the lumenal side of the thylakoid membrane by plastocyanin or cytochrome c6. This Tupiella akineta (Green alga) protein is Photosystem I P700 chlorophyll a apoprotein A2.